Reading from the N-terminus, the 926-residue chain is Chitin synthase-like protein 2 (926 aa).

A disordered region spans residues 1–56 (MSFQNPSYINAKHRSFLQPKDTQDSQDLRNWVSHSSVDEETAYSSSTLSSSSSKSF). Residues 44 to 55 (SSSTLSSSSSKS) are compositionally biased toward low complexity. The next 7 helical transmembrane spans lie at 564–584 (INSS…LWTT), 599–619 (LVFA…FLAF), 641–661 (LFLV…MLAM), 671–691 (LLFI…FCVF), 721–741 (LLIL…FFIF), 853–873 (VLVW…VFDG), and 885–905 (IFWS…TFIA).

This sequence belongs to the chitin synthase family.

It localises to the membrane. In terms of biological role, plays a role in septum formation. Has no chitin synthase activity. This Schizosaccharomyces pombe (strain 972 / ATCC 24843) (Fission yeast) protein is Chitin synthase-like protein 2 (chs2).